The sequence spans 123 residues: Potassium voltage-gated channel subfamily E member 2 (123 aa).

2 N-linked (GlcNAc...) asparagine glycosylation sites follow: asparagine 6 and asparagine 29. A helical transmembrane segment spans residues valine 49–valine 69. Residues serine 70–proline 123 lie on the Cytoplasmic side of the membrane.

This sequence belongs to the potassium channel KCNE family. As to quaternary structure, interacts with KCNB1. Associates with KCNH2/ERG1. May associate with KCNQ2 and KCNQ3. Associates with HCN1 and probably HCN2. Heteromultimer with KCNC2. Interacts with KCNC2. Interacts with KCNQ1. Forms a heterooligomer complex with KCNQ1 that targets to the membrane raft and leading to currents with an apparently instantaneous activation, a rapid deactivation process and a linear current-voltage relationship and decreases the amplitude of the outward current.

It is found in the cell membrane. The protein resides in the apical cell membrane. Ancillary protein that functions as a regulatory subunit of the voltage-gated potassium (Kv) channel complex composed of pore-forming and potassium-conducting alpha subunits and of regulatory beta subunits. KCNE2 beta subunit modulates the gating kinetics and enhances stability of the channel complex. Alters the gating of the delayed rectifier Kv channel containing KCNB1 alpha subunit. Associates with KCNH2/HERG alpha subunit Kv channel to form the rapidly activating component of the delayed rectifying potassium current (IKr) in heart. May associate with KCNQ2 and/or KCNQ3 alpha subunits to modulate the native M-type current. May associate with HCN1 and HCN2 channel subunits to increase potassium current. Forms a heterooligomer complex with KCNQ1/KVLQT1 alpha subunits which leads to currents with an apparently instantaneous activation, a rapid deactivation process and a linear current-voltage relationship and decreases the amplitude of the outward current. KCNQ1-KCNE2 channel associates with Na(+)-coupled myo-inositol symporter in the apical membrane of choroid plexus epithelium and regulates the myo-inositol gradient between blood and cerebrospinal fluid with an impact on neuron excitability. The polypeptide is Potassium voltage-gated channel subfamily E member 2 (Mus musculus (Mouse)).